The primary structure comprises 523 residues: Protein disulfide-isomerase (523 aa).

Residues 1–22 form the signal peptide; the sequence is MPGVRSLLLALAGVSLAPAVLA. Residues 24 to 137 form the Thioredoxin 1 domain; the sequence is DASTDSSDVH…TSYMIKQSLP (114 aa). Catalysis depends on nucleophile residues C59 and C62. The cysteines at positions 59 and 62 are disulfide-linked. N170 carries an N-linked (GlcNAc...) asparagine glycan. Residues 344 to 475 form the Thioredoxin 2 domain; it reads VIAGDIAPSV…LANFVRDNGK (132 aa). The cysteines at positions 394 and 397 are disulfide-linked. Basic and acidic residues-rich tracts occupy residues 478–502 and 512–523; these read VDAY…DAEA and SEEKADKEHEEL. The tract at residues 478-523 is disordered; the sequence is VDAYDEKKVEKDGSDVTGKPKDAEAPPKPSDAPESEEKADKEHEEL. The short motif at 520-523 is the Prevents secretion from ER element; sequence HEEL.

The protein belongs to the protein disulfide isomerase family.

It localises to the endoplasmic reticulum lumen. It carries out the reaction Catalyzes the rearrangement of -S-S- bonds in proteins.. Functionally, participates in the folding of proteins containing disulfide bonds, may be involved in glycosylation, prolyl hydroxylation and triglyceride transfer. This chain is Protein disulfide-isomerase, found in Arthroderma benhamiae (strain ATCC MYA-4681 / CBS 112371) (Trichophyton mentagrophytes).